Here is a 303-residue protein sequence, read N- to C-terminus: MTAIHSLTALDKAHVLADALPWLQKFRDKIVVVKYGGNAMIDEELKRAFAADMAFLRTVGVHPVVVHGGGPQISAMLKKLGLHGEFRGGFRVTTPEVMDVVRMVLFGQVGRELVGLINAHGPYAVGISGEDAGLFTATRRTVVVDGEPTDIGLVGDVTEVNPDAVLDLIGAGRIPVVSTIAPDADGVVHNINADTAAAALAEGIGAEKLVVLTDVEGLYTNWPDRSSLTSSIDAGALAELLPRLDAGMVPKMEACLRAVRGGVPTAHVIDGRVPHAVLLELFTGEGIGTMVTPSAASDGVVPA.

Substrate contacts are provided by residues 69 to 70, R91, and N190; that span reads GG.

The protein belongs to the acetylglutamate kinase family. ArgB subfamily.

The protein localises to the cytoplasm. It carries out the reaction N-acetyl-L-glutamate + ATP = N-acetyl-L-glutamyl 5-phosphate + ADP. Its pathway is amino-acid biosynthesis; L-arginine biosynthesis; N(2)-acetyl-L-ornithine from L-glutamate: step 2/4. In terms of biological role, catalyzes the ATP-dependent phosphorylation of N-acetyl-L-glutamate. The chain is Acetylglutamate kinase from Nocardia farcinica (strain IFM 10152).